The chain runs to 166 residues: Endoribonuclease YbeY (166 aa).

The Zn(2+) site is built by histidine 111, histidine 115, and histidine 121. Residues 140 to 166 (ELGYPDPYADDESADPPHSDTPSKDHE) are disordered. A compositionally biased stretch (basic and acidic residues) spans 154–166 (DPPHSDTPSKDHE).

The protein belongs to the endoribonuclease YbeY family. Requires Zn(2+) as cofactor.

The protein localises to the cytoplasm. Functionally, single strand-specific metallo-endoribonuclease involved in late-stage 70S ribosome quality control and in maturation of the 3' terminus of the 16S rRNA. This chain is Endoribonuclease YbeY, found in Pseudomonas syringae pv. syringae (strain B728a).